A 144-amino-acid chain; its full sequence is Large ribosomal subunit protein uL13 (144 aa).

It belongs to the universal ribosomal protein uL13 family. In terms of assembly, part of the 50S ribosomal subunit.

Functionally, this protein is one of the early assembly proteins of the 50S ribosomal subunit, although it is not seen to bind rRNA by itself. It is important during the early stages of 50S assembly. The chain is Large ribosomal subunit protein uL13 from Oleidesulfovibrio alaskensis (strain ATCC BAA-1058 / DSM 17464 / G20) (Desulfovibrio alaskensis).